A 398-amino-acid polypeptide reads, in one-letter code: MRAKKVVLAYSGGVDTSVCIPYLKHEWGVEQVVALAADLGQGEDLEAVRQKALASGADQAIVQDAREDFVYDYAFAALQANALYEGRYPLATALARPLIARILVKCAQAVGADAVAHGCTGKGNDQVRFDVSIGALDPKLKVLAPAREWGMSREETIAYGERYGIPAPVKKKSPYSIDFNLLGRSVECGVLEDPWAEPPEEVYAMTKCVADTPDQPTYIELEFERGVPVALNGASLGGVKLVGELNRLAGENGVGRIDMVENRLVGIKSREIYECPAGVVLVLAHQALEALTLPREVTAYKRGVEDTYAQLVYNGLWYSPLRGALDGFIDFTQQRASGVVRVRLHKGTATVVGRKSPYSLYDVELATYSEGDSFDHKAAEGFIYVWGLPTRIYAQVRK.

Residues 9–17 (AYSGGVDTS) and alanine 37 each bind ATP. Residue tyrosine 88 coordinates L-citrulline. Glycine 118 is a binding site for ATP. L-aspartate is bound by residues threonine 120, asparagine 124, and aspartate 125. Residue asparagine 124 coordinates L-citrulline. Residues arginine 128, serine 176, serine 185, glutamate 261, and tyrosine 273 each contribute to the L-citrulline site.

This sequence belongs to the argininosuccinate synthase family. Type 1 subfamily. As to quaternary structure, homotetramer.

Its subcellular location is the cytoplasm. The catalysed reaction is L-citrulline + L-aspartate + ATP = 2-(N(omega)-L-arginino)succinate + AMP + diphosphate + H(+). Its pathway is amino-acid biosynthesis; L-arginine biosynthesis; L-arginine from L-ornithine and carbamoyl phosphate: step 2/3. In Gloeobacter violaceus (strain ATCC 29082 / PCC 7421), this protein is Argininosuccinate synthase.